The following is a 286-amino-acid chain: Polyamine aminopropyltransferase (286 aa).

The PABS domain maps to 5–238 (TMWHETLHDQ…GIMTFAWATD (234 aa)). Gln-33 lines the S-methyl-5'-thioadenosine pocket. Positions 64 and 88 each coordinate spermidine. S-methyl-5'-thioadenosine contacts are provided by residues Glu-108 and 140-141 (DG). The active-site Proton acceptor is the Asp-158. 158-161 (DCTD) lines the spermidine pocket. Pro-165 lines the S-methyl-5'-thioadenosine pocket.

The protein belongs to the spermidine/spermine synthase family. As to quaternary structure, homodimer or homotetramer.

It is found in the cytoplasm. The enzyme catalyses S-adenosyl 3-(methylsulfanyl)propylamine + putrescine = S-methyl-5'-thioadenosine + spermidine + H(+). The protein operates within amine and polyamine biosynthesis; spermidine biosynthesis; spermidine from putrescine: step 1/1. Catalyzes the irreversible transfer of a propylamine group from the amino donor S-adenosylmethioninamine (decarboxy-AdoMet) to putrescine (1,4-diaminobutane) to yield spermidine. This Salmonella paratyphi A (strain ATCC 9150 / SARB42) protein is Polyamine aminopropyltransferase.